A 711-amino-acid chain; its full sequence is Ribosomal RNA large subunit methyltransferase K/L (711 aa).

The 112-residue stretch at 42-153 (DAQRAVLWSR…KGRATISVDL (112 aa)) folds into the THUMP domain.

This sequence belongs to the methyltransferase superfamily. RlmKL family.

It is found in the cytoplasm. It catalyses the reaction guanosine(2445) in 23S rRNA + S-adenosyl-L-methionine = N(2)-methylguanosine(2445) in 23S rRNA + S-adenosyl-L-homocysteine + H(+). The enzyme catalyses guanosine(2069) in 23S rRNA + S-adenosyl-L-methionine = N(2)-methylguanosine(2069) in 23S rRNA + S-adenosyl-L-homocysteine + H(+). Specifically methylates the guanine in position 2445 (m2G2445) and the guanine in position 2069 (m7G2069) of 23S rRNA. In Xanthomonas campestris pv. campestris (strain B100), this protein is Ribosomal RNA large subunit methyltransferase K/L.